The sequence spans 471 residues: Probable ribonuclease FAU-1 (471 aa).

It belongs to the FAU-1 family.

In terms of biological role, probable RNase involved in rRNA stability through maturation and/or degradation of precursor rRNAs. Preferentially cleaves UA sequences in the 5' precursor region of 5S rRNA. Binds to RNA in loop regions with AU-rich sequences. The protein is Probable ribonuclease FAU-1 of Thermococcus kodakarensis (strain ATCC BAA-918 / JCM 12380 / KOD1) (Pyrococcus kodakaraensis (strain KOD1)).